Reading from the N-terminus, the 307-residue chain is Ribonuclease H2 subunit B (307 aa).

A2 is modified (N-acetylalanine). Position 291 is an N6-acetyllysine (K291). S292 bears the Phosphoserine mark.

This sequence belongs to the RNase H2 subunit B family. The RNase H2 complex is a heterotrimer composed of the catalytic subunit RNASEH2A and the non-catalytic subunits RNASEH2B and RNASEH2C.

It is found in the nucleus. Non catalytic subunit of RNase H2, an endonuclease that specifically degrades the RNA of RNA:DNA hybrids. Participates in DNA replication, possibly by mediating the removal of lagging-strand Okazaki fragment RNA primers during DNA replication. Mediates the excision of single ribonucleotides from DNA:RNA duplexes. This chain is Ribonuclease H2 subunit B (Rnaseh2b), found in Rattus norvegicus (Rat).